The primary structure comprises 132 residues: Sec-independent protein translocase protein TatB (132 aa).

A helical transmembrane segment spans residues 2-22 (FDGIGFMELLLIGILGLVVLG). The interval 86 to 132 (LKSAAQSVNRPYKVEDISPASSSAPVDPAPTETKTAETSANSEKPNG) is disordered. Residues 103–115 (SPASSSAPVDPAP) are compositionally biased toward low complexity. Residues 117–132 (ETKTAETSANSEKPNG) are compositionally biased toward polar residues.

The protein belongs to the TatB family. As to quaternary structure, the Tat system comprises two distinct complexes: a TatABC complex, containing multiple copies of TatA, TatB and TatC subunits, and a separate TatA complex, containing only TatA subunits. Substrates initially bind to the TatABC complex, which probably triggers association of the separate TatA complex to form the active translocon.

The protein resides in the cell inner membrane. Part of the twin-arginine translocation (Tat) system that transports large folded proteins containing a characteristic twin-arginine motif in their signal peptide across membranes. Together with TatC, TatB is part of a receptor directly interacting with Tat signal peptides. TatB may form an oligomeric binding site that transiently accommodates folded Tat precursor proteins before their translocation. In Shewanella sediminis (strain HAW-EB3), this protein is Sec-independent protein translocase protein TatB.